The primary structure comprises 353 residues: MNLLHTTVARIKPQDENIRRQAKDRLDRLTMPHWALGRLLDLALDLAGMTGSLQPPVDRRLIVTMAGDHGVAAEGVSAFPQEVTGQMVANIANGGAGISTLARVANARVQVVDMGAACDLSDLVDSGQILSRRIAPGTANMALGAAMTREQAVRSLEAGIEIANTFAGEADLFGTGEMGIANTTPSSAIVALLADATADQATGCGTGIDDNRRKHKVSVIERALQTNLPDPHDGLDVLAKVGGFEIGGLAGLILGAAALRKPIIIDGFISTAAALLAQSLAPASVDYMIAAHHSIEQGHQLALARLGKKPLLDLDFRLGEGTGAALAMNLVEGAKRLLTEMATFDEAAVSQGK.

Residue Glu320 is the Proton acceptor of the active site.

This sequence belongs to the CobT family.

It catalyses the reaction 5,6-dimethylbenzimidazole + nicotinate beta-D-ribonucleotide = alpha-ribazole 5'-phosphate + nicotinate + H(+). It functions in the pathway nucleoside biosynthesis; alpha-ribazole biosynthesis; alpha-ribazole from 5,6-dimethylbenzimidazole: step 1/2. Functionally, catalyzes the synthesis of alpha-ribazole-5'-phosphate from nicotinate mononucleotide (NAMN) and 5,6-dimethylbenzimidazole (DMB). The protein is Nicotinate-nucleotide--dimethylbenzimidazole phosphoribosyltransferase of Syntrophotalea carbinolica (strain DSM 2380 / NBRC 103641 / GraBd1) (Pelobacter carbinolicus).